The following is a 474-amino-acid chain: tRNA-2-methylthio-N(6)-dimethylallyladenosine synthase (474 aa).

One can recognise an MTTase N-terminal domain in the interval 3–120 (KKLHIKTWGC…LPEMINQVKG (118 aa)). C12, C49, C83, C157, C161, and C164 together coordinate [4Fe-4S] cluster. The Radical SAM core domain maps to 143–375 (RAEGPTAFVS…QERINQQAMA (233 aa)). In terms of domain architecture, TRAM spans 378 to 441 (RRMLGTTQRI…PNSLRGKVIR (64 aa)).

The protein belongs to the methylthiotransferase family. MiaB subfamily. In terms of assembly, monomer. It depends on [4Fe-4S] cluster as a cofactor.

The protein localises to the cytoplasm. The catalysed reaction is N(6)-dimethylallyladenosine(37) in tRNA + (sulfur carrier)-SH + AH2 + 2 S-adenosyl-L-methionine = 2-methylsulfanyl-N(6)-dimethylallyladenosine(37) in tRNA + (sulfur carrier)-H + 5'-deoxyadenosine + L-methionine + A + S-adenosyl-L-homocysteine + 2 H(+). Catalyzes the methylthiolation of N6-(dimethylallyl)adenosine (i(6)A), leading to the formation of 2-methylthio-N6-(dimethylallyl)adenosine (ms(2)i(6)A) at position 37 in tRNAs that read codons beginning with uridine. The protein is tRNA-2-methylthio-N(6)-dimethylallyladenosine synthase of Cronobacter sakazakii (strain ATCC BAA-894) (Enterobacter sakazakii).